The chain runs to 189 residues: MNYFDNKIDQFATYLQKRNNLDHIQFLQVRLGMQVLAKNIGKLIVMYTIAYILNIFLFTLITNLTFYLIRRHAHGAHAPSSFWCYVESIILFILLPLVIVNFHINFLIMIILTVISLGVISVYAPAATKKKPIPVRLIKRKKYYAIIVSLTLFIITLIIKEPFAQFIQLGIIIEAITLLPIFFIKEDLK.

5 helical membrane-spanning segments follow: residues 49 to 69 (IAYILNIFLFTLITNLTFYLI), 81 to 100 (SFWCYVESIILFILLPLVIV), 110 to 130 (IILTVISLGVISVYAPAATKK), 143 to 163 (YYAIIVSLTLFIITLIIKEPF), and 164 to 184 (AQFIQLGIIIEAITLLPIFFI).

This sequence belongs to the AgrB family.

Its subcellular location is the cell membrane. Its function is as follows. Essential for the production of a quorum sensing system signal molecule, the autoinducing peptide (AIP). This quorum sensing system is responsible for the regulation of the expression of virulence factor genes. Involved in the proteolytic processing of AgrD, the precursor of AIP. The chain is Accessory gene regulator protein B from Staphylococcus aureus (strain COL).